Here is a 45-residue protein sequence, read N- to C-terminus: Monellin chain A (45 aa).

As to quaternary structure, heterodimer of an A chain and a B chain.

Functionally, taste-modifying protein; intensely sweet-tasting protein. This chain is Monellin chain A, found in Dioscoreophyllum cumminsii (Serendipity berry).